Here is a 1698-residue protein sequence, read N- to C-terminus: Cullin-7 (1698 aa).

The segment at 315 to 357 is disordered; the sequence is QASDRPRSSARSPGSIFQPQLADVSPGLPAAQAQPSFRRSRRF. Serine 339 carries the phosphoserine modification. One can recognise a CPH domain in the interval 360–433; sequence RSEFASGNTY…HWHMLEILGF (74 aa). The span at 601-611 shows a compositional bias: basic and acidic residues; the sequence is SEDAAKVEAKE. The tract at residues 601 to 623 is disordered; that stretch reads SEDAAKVEAKEPPSQSPNTPLQR. One can recognise a DOC domain in the interval 814–993; sequence PINIPFFDVF…HTRLFYMVRA (180 aa). The segment at 1345-1370 is disordered; sequence GASGKEHKSEKEEEAGAAAVVDVAEG. Residue lysine 1576 forms a Glycyl lysine isopeptide (Lys-Gly) (interchain with G-Cter in NEDD8) linkage.

Belongs to the cullin family. Component of the 3M complex, composed of core components CUL7, CCDC8 and OBSL1. Component of the Cul7-RING(FBXW8) complex consisting of CUL7, RBX1, SKP1 and FBXW8. Within the Cul7-RING(FBXW8) complex interacts with FBXW8 and RBX1, but not with SKP1. Interacts with CUL1 (via the C-terminal domain); the interaction seems to be mediated by FBXW8; it is likely specific to FBXW8, but not other F-box proteins. Interacts (via the CPH domain) with p53/TP53; the interaction preferentially involves tetrameric and dimeric p53/TP53; this interaction recruits p53/TP53 for ubiquitination by neddylated CUL1-RBX1. The CUL7-CUL9 heterodimer seems to interact specifically with p53/TP53. Interacts with FBXW8; interaction is mutually exclusive of binding to CUL9 or p53/TP53. Interacts with CUL9; leading to inhibited CUL9 activity. Interacts with OBSL1. Interacts (as part of the 3M complex) with HDAC4 and HDAC5; it is negatively regulated by ANKRA2. In terms of assembly, (Microbial infection) Interacts with SV40 Large T antigen; this interaction seems to inhibit CUL7. In terms of processing, according to a report, may not be neddylated despite the conserved consensus site for neddylation at Lys-1576. Structural study of the Cul7-RING(FBXW8) reveals that both CUL7 and RBX1 are in orientations that are incompatible with neddylation. As to expression, highly expressed in fetal kidney and adult skeletal muscle. Also abundant in fetal brain, as well as in adult pancreas, kidney, placenta and heart. Detected in trophoblasts, lymphoblasts, osteoblasts, chondrocytes and skin fibroblasts.

Its subcellular location is the cytoplasm. The protein localises to the cytoskeleton. It localises to the microtubule organizing center. The protein resides in the centrosome. It is found in the perinuclear region. Its subcellular location is the golgi apparatus. The protein operates within protein modification; protein ubiquitination. Its function is as follows. Core component of the 3M and Cul7-RING(FBXW8) complexes, which mediate the ubiquitination and subsequent proteasomal degradation of target proteins. Core component of the 3M complex, a complex required to regulate microtubule dynamics and genome integrity. It is unclear how the 3M complex regulates microtubules, it could act by controlling the level of a microtubule stabilizer. The Cul7-RING(FBXW8) complex alone lacks ubiquitination activity and does not promote polyubiquitination and proteasomal degradation of p53/TP53. However it mediates recruitment of p53/TP53 for ubiquitination by neddylated CUL1-RBX1. Interaction with CUL9 is required to inhibit CUL9 activity and ubiquitination of BIRC5. The Cul7-RING(FBXW8) complex also mediates ubiquitination and consequent degradation of target proteins such as GORASP1, IRS1 and MAP4K1/HPK1. Ubiquitination of GORASP1 regulates Golgi morphogenesis and dendrite patterning in brain. Mediates ubiquitination and degradation of IRS1 in a mTOR-dependent manner: the Cul7-RING(FBXW8) complex recognizes and binds IRS1 previously phosphorylated by S6 kinase (RPS6KB1 or RPS6KB2). The Cul7-RING(FBXW8) complex also mediates ubiquitination of MAP4K1/HPK1: recognizes and binds autophosphorylated MAP4K1/HPK1, leading to its degradation, thereby affecting cell proliferation and differentiation. Acts as a regulator in trophoblast cell epithelial-mesenchymal transition and placental development. While the Cul7-RING(FBXW8) and the 3M complexes are associated and involved in common processes, CUL7 and the Cul7-RING(FBXW8) complex may have additional functions. Probably plays a role in the degradation of proteins involved in endothelial proliferation and/or differentiation. This Homo sapiens (Human) protein is Cullin-7 (CUL7).